A 1006-amino-acid chain; its full sequence is Collagen alpha-2(I) chain (1006 aa).

A disordered region spans residues Ser1–Gly84. Residues Pro10, Pro13, Pro35, and Pro41 each carry the 4-hydroxyproline modification. Low complexity predominate over residues Leu28–Ala64. The residue at position 86 (Lys86) is a 5-hydroxylysine; alternate. Lys86 carries an O-linked (Gal...) hydroxylysine; alternate glycan. The interval Gly99 to Ala1006 is disordered. Composition is skewed to low complexity over residues Ser142 to Pro163 and Pro209 to Pro230. Residues Gly264 to Gly273 show a composition bias toward gly residues. Residues Ser274 to Ser284 show a composition bias toward low complexity. Positions Gly306–Gly315 are enriched in gly residues. Low complexity predominate over residues Pro328–Ser344. 4-hydroxyproline is present on residues Pro350 and Pro353. Positions Leu379–Ala398 are enriched in low complexity. Positions Gly447 to Gly456 are enriched in gly residues. 2 stretches are compositionally biased toward low complexity: residues Pro503–Pro520 and Glu532–Ala542. Positions Gly543–Gly552 are enriched in gly residues. Low complexity-rich tracts occupy residues Ala585–Ser615 and Val622–Ala642. Residues Lys643–Lys652 are compositionally biased toward basic and acidic residues. Residues Pro660–Ala670 show a composition bias toward low complexity. The span at Gly680 to Gly689 shows a compositional bias: gly residues. Residues Thr691–Thr700 are compositionally biased toward low complexity. A compositionally biased stretch (gly residues) spans Gly737–Gly746. Composition is skewed to low complexity over residues Ser754–Pro781 and Leu789–Pro799. The segment covering Gly800–Arg810 has biased composition (gly residues). Residues Tyr837 to Pro882 show a composition bias toward low complexity. Residues Arg892 to Pro903 are compositionally biased toward basic and acidic residues. Positions Ser976–Pro988 are enriched in pro residues.

Belongs to the fibrillar collagen family. As to quaternary structure, trimers of one alpha 2(I) and two alpha 1(I) chains. Interacts (via C-terminus) with TMEM131 (via PapD-L domain); the interaction is direct and is involved in assembly and TRAPPIII ER-to-Golgi transport complex-dependent secretion of collagen. Prolines at the third position of the tripeptide repeating unit (G-X-Y) are hydroxylated in some or all of the chains. In terms of tissue distribution, expressed in bones.

It is found in the secreted. The protein localises to the extracellular space. Its subcellular location is the extracellular matrix. Its function is as follows. Type I collagen is a member of group I collagen (fibrillar forming collagen). The sequence is that of Collagen alpha-2(I) chain from Choloepus hoffmanni (Hoffmann's two-fingered sloth).